Consider the following 130-residue polypeptide: Small ribosomal subunit protein uS8 (130 aa).

The protein belongs to the universal ribosomal protein uS8 family. Part of the 30S ribosomal subunit. Contacts proteins S5 and S12.

Its function is as follows. One of the primary rRNA binding proteins, it binds directly to 16S rRNA central domain where it helps coordinate assembly of the platform of the 30S subunit. This is Small ribosomal subunit protein uS8 from Yersinia enterocolitica serotype O:8 / biotype 1B (strain NCTC 13174 / 8081).